Here is a 471-residue protein sequence, read N- to C-terminus: U1 small nuclear ribonucleoprotein 70 kDa (471 aa).

The disordered stretch occupies residues 48 to 78; that stretch reads FEDPRDAPPPTRAETREERMERKRREKIERR. Residues 60-78 show a composition bias toward basic and acidic residues; the sequence is AETREERMERKRREKIERR. The tract at residues 92 to 202 is required for interaction with U1 RNA; the sequence is HNDQNAQGDA…GGGLGGTRRG (111 aa). The RRM domain occupies 103–184; sequence KTLFVARVNY…LVDVERGRTV (82 aa). Positions 187 to 471 are disordered; sequence WRPRRLGGGL…NGYMMEPPME (285 aa). The segment covering 192 to 201 has biased composition (gly residues); the sequence is LGGGLGGTRR. Positions 207 to 245 are enriched in basic and acidic residues; it reads NIRHSGRDDTSRYDERDRDRERERDRRERSRERDKERER. Over residues 246-259 the composition is skewed to basic residues; that stretch reads RRSRSRERRRRSRS. Residues 260–293 are compositionally biased toward basic and acidic residues; the sequence is REKEERKRSRERSRDKDKDKDKDKDKEKDKDKDR. Over residues 294 to 303 the composition is skewed to basic residues; that stretch reads DRKRRSRSRE. 2 stretches are compositionally biased toward basic and acidic residues: residues 304–321 and 344–428; these read RKRE…RVEG and IELK…ERVP.

As to quaternary structure, component of the U1 snRNP. The U1 snRNP is composed of the U1 snRNA and the 7 core Sm proteins snrpb, snrpd1, snrpd2, snrpd3, snrpe, snrpf and snrpg that assemble in a heptameric protein ring on the Sm site of the small nuclear RNA to form the core snRNP, and at least three U1 snRNP-specific proteins snrnp70/U1-70K, snrpa/U1-A and snrpc/U1-C.

It localises to the nucleus speckle. It is found in the nucleus. The protein localises to the nucleoplasm. Functionally, component of the spliceosomal U1 snRNP, which is essential for recognition of the pre-mRNA 5' splice-site and the subsequent assembly of the spliceosome. snrnp70 binds to the loop I region of U1-snRNA. The chain is U1 small nuclear ribonucleoprotein 70 kDa (snrnp70) from Xenopus tropicalis (Western clawed frog).